The primary structure comprises 287 residues: Casein kinase II subunit beta-1 (287 aa).

The interval 1 to 97 (MYRDRGTVNS…ESDVSGSDGE (97 aa)) is disordered. Residues 13–25 (EVVDRKRINDALE) show a composition bias toward basic and acidic residues. Over residues 41–50 (GTVTAATTTA) the composition is skewed to low complexity. The segment covering 78–97 (SDDESDTDSEESDVSGSDGE) has biased composition (acidic residues).

This sequence belongs to the casein kinase 2 subunit beta family. Heterotetramer of two catalytic alpha subunits and two regulatory beta subunits. Interacts with CCA1. Interacts with LHY. In terms of processing, phosphorylated by alpha subunit.

Its subcellular location is the cytoplasm. The protein localises to the cytosol. It is found in the nucleus. Plays a complex role in regulating the basal catalytic activity of the alpha subunit. The tetrameric holoenzyme CK2, composed of two alpha and two beta subunits, phosphorylates the transcription factor GBFl, resulting in stimulation of its DNA binding activity. CK2 phosphorylates the transcription factor PIF1 after an exposure to light, resulting in a proteasome-dependent degradation of PIF1 and promotion of photomorphogenesis. CK2 phosphorylates translation initiation factors. May participate in the regulation of the initiation of translation. Stimulates the binding of CCA1 to promoters. This chain is Casein kinase II subunit beta-1 (CKB1), found in Arabidopsis thaliana (Mouse-ear cress).